Consider the following 160-residue polypeptide: Putative pre-16S rRNA nuclease (160 aa).

Belongs to the YqgF nuclease family.

Its subcellular location is the cytoplasm. Could be a nuclease involved in processing of the 5'-end of pre-16S rRNA. This Gluconobacter oxydans (strain 621H) (Gluconobacter suboxydans) protein is Putative pre-16S rRNA nuclease.